The chain runs to 269 residues: Undecaprenyl-diphosphatase (269 aa).

8 helical membrane passes run 3 to 23 (LLIK…LPIS), 41 to 61 (FATM…VFYY), 78 to 98 (GFNL…IGLL), 107 to 127 (LFSP…MIVI), 148 to 167 (SLLI…SRSA), 184 to 204 (AEFS…LSLL), 213 to 233 (LEWQ…LFVV), and 248 to 268 (FAYY…EKIV).

The protein belongs to the UppP family.

The protein localises to the cell membrane. It catalyses the reaction di-trans,octa-cis-undecaprenyl diphosphate + H2O = di-trans,octa-cis-undecaprenyl phosphate + phosphate + H(+). In terms of biological role, catalyzes the dephosphorylation of undecaprenyl diphosphate (UPP). Confers resistance to bacitracin. The polypeptide is Undecaprenyl-diphosphatase (Thermoanaerobacter sp. (strain X514)).